The following is a 78-amino-acid chain: Large ribosomal subunit protein bL31 (78 aa).

Zn(2+) is bound by residues C16, C18, C38, and C41.

The protein belongs to the bacterial ribosomal protein bL31 family. Type A subfamily. In terms of assembly, part of the 50S ribosomal subunit. Zn(2+) serves as cofactor.

Its function is as follows. Binds the 23S rRNA. The chain is Large ribosomal subunit protein bL31 from Frankia casuarinae (strain DSM 45818 / CECT 9043 / HFP020203 / CcI3).